A 526-amino-acid polypeptide reads, in one-letter code: ATP-dependent RNA helicase DBP3 (526 aa).

Positions 1–33 are enriched in basic and acidic residues; sequence MVEEHKNKKRRQEDGPADVPEKKVKVSKSEKKD. The interval 1–86 is disordered; the sequence is MVEEHKNKKR…SSQGYTQSES (86 aa). Residues 34–65 show a composition bias toward basic residues; it reads KKEKKEKKEKKEKKEKKEKKEKKEKKEKKKKY. Polar residues predominate over residues 69–86; sequence ATISGSAQSSQGYTQSES. The Q motif signature appears at 118-144; it reads LSFDQIQLNSKISAVVNKFPTPTPIQS. The Helicase ATP-binding domain maps to 147–318; it reads WPYLLSGKDV…STFMNQPVKV (172 aa). 160–167 contacts ATP; it reads AETGSGKT. Residues 265–268 carry the DEAD box motif; it reads DEAD. A Helicase C-terminal domain is found at 334–496; the sequence is QIVEVIEPFD…PVPDELLKFG (163 aa).

The protein belongs to the DEAD box helicase family. DDX5/DBP2 subfamily.

The protein resides in the nucleus. It is found in the nucleolus. It catalyses the reaction ATP + H2O = ADP + phosphate + H(+). ATP-dependent RNA helicase required for 60S ribosomal subunit synthesis. Involved in efficient pre-rRNA processing, predominantly at site A3, which is necessary for the normal formation of 25S and 5.8S rRNAs. This is ATP-dependent RNA helicase DBP3 (DBP3) from Scheffersomyces stipitis (strain ATCC 58785 / CBS 6054 / NBRC 10063 / NRRL Y-11545) (Yeast).